A 180-amino-acid chain; its full sequence is UPF0227 protein Spro_1925 (180 aa).

The protein belongs to the UPF0227 family.

This Serratia proteamaculans (strain 568) protein is UPF0227 protein Spro_1925.